The following is a 1407-amino-acid chain: DNA-directed RNA polymerase subunit beta' (1407 aa).

Positions 70, 72, 85, and 88 each coordinate Zn(2+). Residues D460, D462, and D464 each coordinate Mg(2+). Residues C814, C888, C895, and C898 each contribute to the Zn(2+) site.

Belongs to the RNA polymerase beta' chain family. In terms of assembly, the RNAP catalytic core consists of 2 alpha, 1 beta, 1 beta' and 1 omega subunit. When a sigma factor is associated with the core the holoenzyme is formed, which can initiate transcription. The cofactor is Mg(2+). Zn(2+) is required as a cofactor.

It catalyses the reaction RNA(n) + a ribonucleoside 5'-triphosphate = RNA(n+1) + diphosphate. Its function is as follows. DNA-dependent RNA polymerase catalyzes the transcription of DNA into RNA using the four ribonucleoside triphosphates as substrates. The protein is DNA-directed RNA polymerase subunit beta' of Salmonella arizonae (strain ATCC BAA-731 / CDC346-86 / RSK2980).